A 2311-amino-acid polypeptide reads, in one-letter code: Proto-oncogene tyrosine-protein kinase ROS (2311 aa).

Positions 1–24 (MRNACLLLNRLGAFYFIWISAAYC) are cleaved as a signal peptide. Residues 25–1873 (SFSKNCQDLC…LAKDTVTSPD (1849 aa)) are Extracellular-facing. Asn49, Asn65, Asn77, Asn123, Asn132, Asn265, Asn287, Asn307, Asn333, Asn377, Asn405, Asn480, Asn607, Asn628, Asn706, Asn714, Asn911, Asn940, Asn962, Asn971, Asn1110, Asn1154, Asn1180, Asn1233, Asn1255, Asn1282, Asn1316, Asn1470, Asn1509, Asn1588, Asn1628, Asn1682, Asn1696, and Asn1730 each carry an N-linked (GlcNAc...) asparagine glycan. Fibronectin type-III domains follow at residues 110–202 (KPGA…ASGV) and 203–294 (PTTA…PESK). The Fibronectin type-III 3 domain occupies 571–671 (LPTLPRLVTV…EPFRGMTFEE (101 aa)). Fibronectin type-III domains follow at residues 952–1047 (VPES…APEG) and 1051–1158 (APAN…SSDI). Fibronectin type-III domains lie at 1459-1569 (DTEK…TLYG), 1570-1669 (VPEG…AKTF), 1671-1766 (TPLS…TTAG), and 1767-1868 (VPSK…AKDT). A compositionally biased stretch (low complexity) spans 1754–1764 (STSSPTSFKTT). Positions 1754–1786 (STSSPTSFKTTAGVPSKPGTPKRAEDSKNSVQW) are disordered. Over residues 1775 to 1786 (KRAEDSKNSVQW) the composition is skewed to basic and acidic residues. 3 N-linked (GlcNAc...) asparagine glycosylation sites follow: Asn1792, Asn1795, and Asn1822. A helical transmembrane segment spans residues 1874-1898 (ITAIVAVIGAVVLGLTIIILFGFVW). Residues 1899–2311 (HQRWKSRKPA…SISSAELTSV (413 aa)) lie on the Cytoplasmic side of the membrane. The Protein kinase domain occupies 1961–2240 (LNLHKLLGSG…KLQEIRHSPL (280 aa)). Residues 1967-1975 (LGSGAFGEV) and Lys1996 each bind ATP. Asp2095 (proton acceptor) is an active-site residue. The residue at position 2131 (Tyr2131) is a Phosphotyrosine; by autocatalysis.

It belongs to the protein kinase superfamily. Tyr protein kinase family. Insulin receptor subfamily. Interacts with VAV3; constitutive interaction mediating VAV3 phosphorylation. Highest expression in kidney. Also expressed in gonad, thymus, bursa, brain and kidney.

The protein resides in the cell membrane. The catalysed reaction is L-tyrosyl-[protein] + ATP = O-phospho-L-tyrosyl-[protein] + ADP + H(+). Functionally, orphan receptor tyrosine kinase (RTK) that may activate several downstream signaling pathways related to cell differentiation, proliferation, growth and survival including the PI3 kinase-mTOR signaling pathway. Mediates the phosphorylation of PTPN11, an activator of this pathway. May also phosphorylate and activate the transcription factor STAT3 to control anchorage-independent cell growth. Mediates the phosphorylation and the activation of VAV3, a guanine nucleotide exchange factor regulating cell morphology. May activate other downstream signaling proteins including AKT1, MAPK1, MAPK3, IRS1, and PLCG2. The chain is Proto-oncogene tyrosine-protein kinase ROS (ROS1) from Gallus gallus (Chicken).